The following is a 503-amino-acid chain: MVSIRPDEISSIIRQQIESYDQSVQVSNVGTVLQVGDGTARIYGLEQVMSQELLEFEDGTIGIALNLEEDNVGAVLMGDGFGIQEGSTVKTTGQIAQIPIGDAMVGRVVDSLGRPIDGKGPISSTATRLLESPAPGIIERKSVCEPMQTGITAIDAMIPIGRGQRELIIGDRKTGKTAIAIDTIINQKSEDVICVYVAIGQKASTVAQIIDTLTEKGAMAYTIVVAANANDPATLQYLAPYTGATLAEHFMYQGKSTLVIYDDLSKQAQAYRQMSLLMRRPPGREAYPGDVFYIHSRLLERAAKLSDALGGGSMTALPVIETQAGDVSAYIPTNVISITDGQIFLSTDLFNAGFRPAINAGISVSRVGSAAQTKAMKKVAGKLKLELAQFAELEAFSQFASDLDAATQAQLARGQRLRQLLKQPENSPLSVWEQVAISYAGLNGYIDTIPVDKVTEFAQGLRDYLKANKAKYVEIINSSKALTDEAETLLKEGIKEFTQGFAA.

170 to 177 (GDRKTGKT) lines the ATP pocket.

Belongs to the ATPase alpha/beta chains family. In terms of assembly, F-type ATPases have 2 components, CF(1) - the catalytic core - and CF(0) - the membrane proton channel. CF(1) has five subunits: alpha(3), beta(3), gamma(1), delta(1), epsilon(1). CF(0) has four main subunits: a(1), b(1), b'(1) and c(9-12).

The protein resides in the cellular thylakoid membrane. It catalyses the reaction ATP + H2O + 4 H(+)(in) = ADP + phosphate + 5 H(+)(out). Produces ATP from ADP in the presence of a proton gradient across the membrane. The alpha chain is a regulatory subunit. This Synechocystis sp. (strain ATCC 27184 / PCC 6803 / Kazusa) protein is ATP synthase subunit alpha.